The following is a 341-amino-acid chain: Anthranilate phosphoribosyltransferase (341 aa).

Residues G81, 84–85 (GD), S89, 91–94 (NIST), 109–117 (KHGNRSASS), and S121 each bind 5-phospho-alpha-D-ribose 1-diphosphate. G81 is an anthranilate binding site. S93 is a Mg(2+) binding site. Anthranilate is bound at residue N112. Position 167 (R167) interacts with anthranilate. D225 and E226 together coordinate Mg(2+).

This sequence belongs to the anthranilate phosphoribosyltransferase family. In terms of assembly, homodimer. Mg(2+) is required as a cofactor.

The catalysed reaction is N-(5-phospho-beta-D-ribosyl)anthranilate + diphosphate = 5-phospho-alpha-D-ribose 1-diphosphate + anthranilate. It functions in the pathway amino-acid biosynthesis; L-tryptophan biosynthesis; L-tryptophan from chorismate: step 2/5. Catalyzes the transfer of the phosphoribosyl group of 5-phosphorylribose-1-pyrophosphate (PRPP) to anthranilate to yield N-(5'-phosphoribosyl)-anthranilate (PRA). The polypeptide is Anthranilate phosphoribosyltransferase (Nocardioides sp. (strain ATCC BAA-499 / JS614)).